The chain runs to 398 residues: Succinate--CoA ligase [ADP-forming] subunit beta (398 aa).

One can recognise an ATP-grasp domain in the interval 9 to 254 (KALLKSYGAP…TTEEDDKEIE (246 aa)). Residues Lys-46, 53–55 (GRG), Glu-109, Ala-112, and Glu-117 each bind ATP. Mg(2+) contacts are provided by Asn-209 and Asp-223. Residues Asn-274 and 331 to 333 (GIM) each bind substrate.

The protein belongs to the succinate/malate CoA ligase beta subunit family. In terms of assembly, heterotetramer of two alpha and two beta subunits. The cofactor is Mg(2+).

It carries out the reaction succinate + ATP + CoA = succinyl-CoA + ADP + phosphate. The catalysed reaction is GTP + succinate + CoA = succinyl-CoA + GDP + phosphate. The protein operates within carbohydrate metabolism; tricarboxylic acid cycle; succinate from succinyl-CoA (ligase route): step 1/1. Succinyl-CoA synthetase functions in the citric acid cycle (TCA), coupling the hydrolysis of succinyl-CoA to the synthesis of either ATP or GTP and thus represents the only step of substrate-level phosphorylation in the TCA. The beta subunit provides nucleotide specificity of the enzyme and binds the substrate succinate, while the binding sites for coenzyme A and phosphate are found in the alpha subunit. This Rhizobium meliloti (strain 1021) (Ensifer meliloti) protein is Succinate--CoA ligase [ADP-forming] subunit beta.